A 495-amino-acid chain; its full sequence is MQWSPTPGASACLGWASSLACSTAPTLLGRAGRGPLMAAKWFKEFPLNLKTVSERAKPGGGGGKLRKNSEAGGAGPGPGKGRKNSAAELGSGRAGVGPKDSRLSRDSLQGLIQAAAGKGRKNSRATEEEPHRGATKSSGCSTYINRLIKVDTQEKNGKSNYPSSSSSSSSSSSSASSSPSSLGPELDKGKIIKQQETVIILEDYADPYDAKRTKGQRDAERVGENDGYMEPYDAQQMITEIRRRGSKDPLVKALQLLDSPCEPADGGLKSETLAKRRSSKDLLGKPPQLYDTPYEPAEGGPRAEGKARPPDSRLPENDERPAAEYEQPWEWKKEQIVRALSVQFEGAERPSFREETVRQHHRQKSWTQKILKPALSDHSEGEKVDPGLPLEKQPWYHGAISRAEAESRLQPCKEAGYLVRNSESGNSRYSIALKTSQGCVHIIVAQTKDNKYTLNQTSAVFDSIPEVVHYYSNEKLPFKGAEHMTLLYPVHSKLH.

Disordered stretches follow at residues 51–190, 203–233, and 256–327; these read TVSE…DKGK, DYADPYDAKRTKGQRDAERVGENDGYMEPYD, and LLDS…EYEQ. A Phosphoserine modification is found at Ser-107. Residues 135-144 are compositionally biased toward polar residues; the sequence is TKSSGCSTYI. Basic and acidic residues predominate over residues 148-157; sequence IKVDTQEKNG. The segment covering 162–181 has biased composition (low complexity); the sequence is PSSSSSSSSSSSSASSSPSS. 2 stretches are compositionally biased toward basic and acidic residues: residues 208–224 and 301–327; these read YDAKRTKGQRDAERVGE and PRAEGKARPPDSRLPENDERPAAEYEQ. The region spanning 395–490 is the SH2 domain; it reads WYHGAISRAE…AEHMTLLYPV (96 aa).

The chain is SH2 domain-containing adapter protein E (SHE) from Homo sapiens (Human).